Here is a 422-residue protein sequence, read N- to C-terminus: UDP-N-acetylglucosamine 1-carboxyvinyltransferase (422 aa).

Residue 22-23 (KN) coordinates phosphoenolpyruvate. A UDP-N-acetyl-alpha-D-glucosamine-binding site is contributed by Arg92. Cys116 functions as the Proton donor in the catalytic mechanism. Cys116 is modified (2-(S-cysteinyl)pyruvic acid O-phosphothioketal). Residues 121–125 (RPVDQ), Asp305, and Ile327 contribute to the UDP-N-acetyl-alpha-D-glucosamine site.

The protein belongs to the EPSP synthase family. MurA subfamily.

The protein localises to the cytoplasm. The enzyme catalyses phosphoenolpyruvate + UDP-N-acetyl-alpha-D-glucosamine = UDP-N-acetyl-3-O-(1-carboxyvinyl)-alpha-D-glucosamine + phosphate. It functions in the pathway cell wall biogenesis; peptidoglycan biosynthesis. Functionally, cell wall formation. Adds enolpyruvyl to UDP-N-acetylglucosamine. The protein is UDP-N-acetylglucosamine 1-carboxyvinyltransferase of Sorangium cellulosum (strain So ce56) (Polyangium cellulosum (strain So ce56)).